A 324-amino-acid polypeptide reads, in one-letter code: Glyoxylate/hydroxypyruvate reductase B (324 aa).

Catalysis depends on residues Arg-237 and Glu-266. Residue His-285 is the Proton donor of the active site.

The protein belongs to the D-isomer specific 2-hydroxyacid dehydrogenase family. GhrB subfamily. Homodimer.

The protein resides in the cytoplasm. It catalyses the reaction glycolate + NADP(+) = glyoxylate + NADPH + H(+). The catalysed reaction is (R)-glycerate + NAD(+) = 3-hydroxypyruvate + NADH + H(+). The enzyme catalyses (R)-glycerate + NADP(+) = 3-hydroxypyruvate + NADPH + H(+). Catalyzes the NADPH-dependent reduction of glyoxylate and hydroxypyruvate into glycolate and glycerate, respectively. In Salmonella paratyphi B (strain ATCC BAA-1250 / SPB7), this protein is Glyoxylate/hydroxypyruvate reductase B.